We begin with the raw amino-acid sequence, 258 residues long: tRNA (guanine-N(7)-)-methyltransferase (258 aa).

S-adenosyl-L-methionine is bound by residues glycine 76, 99 to 100, 132 to 133, and leucine 152; these read EI and NA. Aspartate 155 is a catalytic residue. Position 230-232 (230-232) interacts with S-adenosyl-L-methionine; that stretch reads TEE.

It belongs to the class I-like SAM-binding methyltransferase superfamily. TrmB family.

The protein resides in the nucleus. It carries out the reaction guanosine(46) in tRNA + S-adenosyl-L-methionine = N(7)-methylguanosine(46) in tRNA + S-adenosyl-L-homocysteine. The protein operates within tRNA modification; N(7)-methylguanine-tRNA biosynthesis. Functionally, catalyzes the formation of N(7)-methylguanine at position 46 (m7G46) in tRNA. The chain is tRNA (guanine-N(7)-)-methyltransferase from Brugia malayi (Filarial nematode worm).